A 371-amino-acid polypeptide reads, in one-letter code: Chorismate synthase (371 aa).

NADP(+) contacts are provided by arginine 48 and arginine 54. Residues 125–127, 238–239, glycine 278, 293–297, and arginine 319 each bind FMN; these read RSS, NA, and KPTSS.

It belongs to the chorismate synthase family. Homotetramer. Requires FMNH2 as cofactor.

The catalysed reaction is 5-O-(1-carboxyvinyl)-3-phosphoshikimate = chorismate + phosphate. It participates in metabolic intermediate biosynthesis; chorismate biosynthesis; chorismate from D-erythrose 4-phosphate and phosphoenolpyruvate: step 7/7. Its function is as follows. Catalyzes the anti-1,4-elimination of the C-3 phosphate and the C-6 proR hydrogen from 5-enolpyruvylshikimate-3-phosphate (EPSP) to yield chorismate, which is the branch point compound that serves as the starting substrate for the three terminal pathways of aromatic amino acid biosynthesis. This reaction introduces a second double bond into the aromatic ring system. This chain is Chorismate synthase, found in Saccharophagus degradans (strain 2-40 / ATCC 43961 / DSM 17024).